Consider the following 592-residue polypeptide: MDLRRRPPKPPVTNNNNSNGSFRSYQPRTSDDDHRRRATTIAPPPKASDALPLPLYLTNAVFFTLFFSVAYYLLHRWRDKIRYNTPLHVVTITELGAIIALIASFIYLLGFFGIDFVQSFISRASGDAWDLADTIDDDDHRLVTCSPPTPIVSVAKLPNPEPIVTESLPEEDEEIVKSVIDGVIPSYSLESRLGDCKRAASIRREALQRVTGRSIEGLPLDGFDYESILGQCCEMPVGYIQIPVGIAGPLLLDGYEYSVPMATTEGCLVASTNRGCKAMFISGGATSTVLKDGMTRAPVVRFASARRASELKFFLENPENFDTLAVVFNRSSRFARLQSVKCTIAGKNAYVRFCCSTGDAMGMNMVSKGVQNVLEYLTDDFPDMDVIGISGNFCSDKKPAAVNWIEGRGKSVVCEAVIRGEIVNKVLKTSVAALVELNMLKNLAGSAVAGSLGGFNAHASNIVSAVFIATGQDPAQNVESSQCITMMEAINDGKDIHISVTMPSIEVGTVGGGTQLASQSACLNLLGVKGASTESPGMNARRLATIVAGAVLAGELSLMSAIAAGQLVRSHMKYNRSSRDISGATTTTTTTT.

The tract at residues 1–45 (MDLRRRPPKPPVTNNNNSNGSFRSYQPRTSDDDHRRRATTIAPPP) is disordered. Polar residues predominate over residues 12 to 28 (VTNNNNSNGSFRSYQPR). N-linked (GlcNAc...) asparagine glycans are attached at residues Asn16 and Asn19. The next 2 membrane-spanning stretches (helical) occupy residues 47 to 69 (ASDALPLPLYLTNAVFFTLFFSV) and 97 to 117 (AIIALIASFIYLLGFFGIDFV). A linker region spans residues 118 to 171 (QSFISRASGDAWDLADTIDDDDHRLVTCSPPTPIVSVAKLPNPEPIVTESLPEE). Positions 172-592 (DEEIVKSVID…GATTTTTTTT (421 aa)) are catalytic. Catalysis depends on Glu265, which acts as the Charge relay system. Asn329 is a glycosylation site (N-linked (GlcNAc...) asparagine). Residues Lys397 and Asp473 each act as charge relay system in the active site. His571 serves as the catalytic Proton donor. Asn575 carries N-linked (GlcNAc...) asparagine glycosylation. Ser577 carries the post-translational modification Phosphoserine.

It belongs to the HMG-CoA reductase family. In terms of assembly, interacts (via N-terminus) with B''ALPHA and B''BETA. Inactivated by phosphorylation at Ser-577 by KIN10 activated form. Probably also phosphorylated at additional sites. Found in all tissues. Isoform Short is expressed at low levels specifically in flowers. Expressed in both the tapetum and microspores.

Its subcellular location is the endoplasmic reticulum membrane. It catalyses the reaction (R)-mevalonate + 2 NADP(+) + CoA = (3S)-3-hydroxy-3-methylglutaryl-CoA + 2 NADPH + 2 H(+). The protein operates within metabolic intermediate biosynthesis; (R)-mevalonate biosynthesis; (R)-mevalonate from acetyl-CoA: step 3/3. Its activity is regulated as follows. Regulated at the post-translational level in response to alterations of sphingolipid and sterol biosynthetic pathways. Negatively regulated by a PP2A-dependent dephosphorylation occurring at a site different than Ser-577. Completely inhibited by mevinolin (IC(50) = 12.5 nM). Reversibly inactivated by phosphorylation at Ser-577 by spinach or Brassica oleracea HMGR kinases in a cell-free system. Down-regulated by KIN10 through its phosphorylation at Ser-577. In terms of biological role, catalyzes the synthesis of mevalonate, the specific precursor of all isoprenoid compounds present in plants. In Arabidopsis thaliana (Mouse-ear cress), this protein is 3-hydroxy-3-methylglutaryl-coenzyme A reductase 1.